Consider the following 421-residue polypeptide: Zinc metalloproteinase-disintegrin-like crotastatin (421 aa).

The Peptidase M12B domain occupies 10-206 (KYVKLFLVAD…NMPQCILKKP (197 aa)). Asparagine 29 carries an N-linked (GlcNAc...) asparagine glycan. Intrachain disulfides connect cysteine 121–cysteine 201, cysteine 161–cysteine 185, and cysteine 163–cysteine 168. Zn(2+) is bound at residue histidine 146. Residue glutamate 147 is part of the active site. 2 residues coordinate Zn(2+): histidine 150 and histidine 156. One can recognise a Disintegrin domain in the interval 214–299 (PAVCGNYFVE…TECTDRFQRN (86 aa)). Ca(2+) is bound by residues valine 216, asparagine 219, phenylalanine 221, glutamate 223, glutamate 226, and aspartate 229. Cystine bridges form between cysteine 217–cysteine 246, cysteine 228–cysteine 241, cysteine 230–cysteine 236, cysteine 240–cysteine 263, cysteine 254–cysteine 260, cysteine 259–cysteine 285, cysteine 272–cysteine 292, cysteine 279–cysteine 310, cysteine 303–cysteine 315, cysteine 322–cysteine 372, cysteine 337–cysteine 383, cysteine 350–cysteine 360, cysteine 367–cysteine 409, and cysteine 403–cysteine 414. A D/ECD-tripeptide motif is present at residues 278-280 (ECD). Ca(2+) contacts are provided by aspartate 280, methionine 281, aspartate 283, aspartate 294, and arginine 295.

It belongs to the venom metalloproteinase (M12B) family. P-III subfamily. P-IIIc sub-subfamily. Homodimer; disulfide-linked. Zn(2+) serves as cofactor. In terms of tissue distribution, expressed by the venom gland.

Its subcellular location is the secreted. In terms of biological role, snake venom zinc metalloprotease that induces apoptosis in vascular endothelial cells (VEC), without degrading the extracellular matrix (it cannot cleave collagen) or inhibiting adhesion of VEC. Has also fibrinogenolytic and hemorrhagic activities. In Crotalus durissus terrificus (South American rattlesnake), this protein is Zinc metalloproteinase-disintegrin-like crotastatin.